Consider the following 184-residue polypeptide: Protein GrpE (184 aa).

The segment covering 1 to 17 (MQHEDKTPEQQENKTPE) has biased composition (basic and acidic residues). Residues 1-39 (MQHEDKTPEQQENKTPETELQQENAPATPQEAGAAGSID) form a disordered region. The span at 18–27 (TELQQENAPA) shows a compositional bias: polar residues.

The protein belongs to the GrpE family. Homodimer.

Its subcellular location is the cytoplasm. Participates actively in the response to hyperosmotic and heat shock by preventing the aggregation of stress-denatured proteins, in association with DnaK and GrpE. It is the nucleotide exchange factor for DnaK and may function as a thermosensor. Unfolded proteins bind initially to DnaJ; upon interaction with the DnaJ-bound protein, DnaK hydrolyzes its bound ATP, resulting in the formation of a stable complex. GrpE releases ADP from DnaK; ATP binding to DnaK triggers the release of the substrate protein, thus completing the reaction cycle. Several rounds of ATP-dependent interactions between DnaJ, DnaK and GrpE are required for fully efficient folding. The polypeptide is Protein GrpE (Methylobacillus flagellatus (strain ATCC 51484 / DSM 6875 / VKM B-1610 / KT)).